The primary structure comprises 351 residues: Photosystem II D2 protein (351 aa).

Residues 39–59 traverse the membrane as a helical segment; that stretch reads CSYLALGGWLTGTTFVTSWYT. A chlorophyll a-binding site is contributed by histidine 116. A helical membrane pass occupies residues 123 to 139; sequence GFCLRQFEIARLVGIRP. Pheophytin a contacts are provided by glutamine 128 and asparagine 141. Residues 151–164 form a helical membrane-spanning segment; that stretch reads VFVSVFLMYPLGQA. Histidine 196 contributes to the chlorophyll a binding site. A helical membrane pass occupies residues 206 to 226; the sequence is GALLCAIHGATVQNTLFEDGD. Histidine 213 and phenylalanine 260 together coordinate a plastoquinone. Histidine 213 provides a ligand contact to Fe cation. Residue histidine 267 participates in Fe cation binding. The helical transmembrane segment at 277–293 threads the bilayer; the sequence is GLWTSAFGIVGLALNLR.

Belongs to the reaction center PufL/M/PsbA/D family. As to quaternary structure, PSII is composed of 1 copy each of membrane proteins PsbA, PsbB, PsbC, PsbD, PsbE, PsbF, PsbH, PsbI, PsbJ, PsbK, PsbL, PsbM, PsbT, PsbX, PsbY, PsbZ, Psb30/Ycf12, at least 3 peripheral proteins of the oxygen-evolving complex and a large number of cofactors. It forms dimeric complexes. The cofactor is The D1/D2 heterodimer binds P680, chlorophylls that are the primary electron donor of PSII, and subsequent electron acceptors. It shares a non-heme iron and each subunit binds pheophytin, quinone, additional chlorophylls, carotenoids and lipids. There is also a Cl(-1) ion associated with D1 and D2, which is required for oxygen evolution. The PSII complex binds additional chlorophylls, carotenoids and specific lipids..

It is found in the plastid. It localises to the chloroplast thylakoid membrane. It carries out the reaction 2 a plastoquinone + 4 hnu + 2 H2O = 2 a plastoquinol + O2. Photosystem II (PSII) is a light-driven water:plastoquinone oxidoreductase that uses light energy to abstract electrons from H(2)O, generating O(2) and a proton gradient subsequently used for ATP formation. It consists of a core antenna complex that captures photons, and an electron transfer chain that converts photonic excitation into a charge separation. The D1/D2 (PsbA/PsbD) reaction center heterodimer binds P680, the primary electron donor of PSII as well as several subsequent electron acceptors. D2 is needed for assembly of a stable PSII complex. The sequence is that of Photosystem II D2 protein from Gracilaria tenuistipitata var. liui (Red alga).